We begin with the raw amino-acid sequence, 256 residues long: 5-oxoprolinase subunit A (256 aa).

This sequence belongs to the LamB/PxpA family. As to quaternary structure, forms a complex composed of PxpA, PxpB and PxpC.

The catalysed reaction is 5-oxo-L-proline + ATP + 2 H2O = L-glutamate + ADP + phosphate + H(+). In terms of biological role, catalyzes the cleavage of 5-oxoproline to form L-glutamate coupled to the hydrolysis of ATP to ADP and inorganic phosphate. This chain is 5-oxoprolinase subunit A, found in Azoarcus sp. (strain BH72).